Here is a 536-residue protein sequence, read N- to C-terminus: Coilin (536 aa).

A disordered region spans residues 96–316; the sequence is AETCNDGAQN…QHSQSPTSDS (221 aa). A compositionally biased stretch (basic residues) spans 171-180; it reads KTHKGKRTKK. Basic and acidic residues predominate over residues 181 to 192; it reads KSEAPIENPPDK. Positions 213 to 238 are enriched in low complexity; it reads QTSSSDSSDTSSCSDQPTPTTQQKPQ. Polar residues-rich tracts occupy residues 239-257 and 303-316; these read SSAK…THSV and THIQ…TSDS. Repeat copies occupy residues 353–358 and 380–385. Residues 353-385 form a 2 X 6 AA repeats of R-G-R-G-R-G region; sequence RGRGRGEDFSWRGQRGRWFRGQGNNSNRGRGRG. A disordered region spans residues 368–387; that stretch reads GRWFRGQGNNSNRGRGRGDS. The segment covering 371 to 380 has biased composition (low complexity); it reads FRGQGNNSNR. One can recognise a Tudor; atypical domain in the interval 425–523; that stretch reads DYSSLPLLAA…VMLNWNTLIE (99 aa).

It belongs to the coilin family. As to expression, expressed in both oocytes and somatic cells.

The protein resides in the nucleus. This Xenopus laevis (African clawed frog) protein is Coilin (coil).